A 615-amino-acid chain; its full sequence is UvrABC system protein C (615 aa).

Residues 12-91 (EKPGVYIMKD…IKKYKPKYNV (80 aa)) form the GIY-YIG domain. Residues 203 to 238 (DWLIQKLKEDMKKAAEELRFEEAARIRDQIFAIERT) form the UVR domain.

It belongs to the UvrC family. Interacts with UvrB in an incision complex.

The protein localises to the cytoplasm. In terms of biological role, the UvrABC repair system catalyzes the recognition and processing of DNA lesions. UvrC both incises the 5' and 3' sides of the lesion. The N-terminal half is responsible for the 3' incision and the C-terminal half is responsible for the 5' incision. The chain is UvrABC system protein C from Thermoanaerobacter pseudethanolicus (strain ATCC 33223 / 39E) (Clostridium thermohydrosulfuricum).